We begin with the raw amino-acid sequence, 407 residues long: Tryptophan synthase beta chain (407 aa).

Lys91 is modified (N6-(pyridoxal phosphate)lysine).

It belongs to the TrpB family. In terms of assembly, tetramer of two alpha and two beta chains. It depends on pyridoxal 5'-phosphate as a cofactor.

It catalyses the reaction (1S,2R)-1-C-(indol-3-yl)glycerol 3-phosphate + L-serine = D-glyceraldehyde 3-phosphate + L-tryptophan + H2O. Its pathway is amino-acid biosynthesis; L-tryptophan biosynthesis; L-tryptophan from chorismate: step 5/5. Functionally, the beta subunit is responsible for the synthesis of L-tryptophan from indole and L-serine. The chain is Tryptophan synthase beta chain from Streptococcus pneumoniae serotype 2 (strain D39 / NCTC 7466).